A 269-amino-acid chain; its full sequence is Eukaryotic translation initiation factor 3 subunit G-1 (269 aa).

In terms of domain architecture, RRM spans 188-266 (AAIRISNLSE…LILSVEWSKP (79 aa)).

The protein belongs to the eIF-3 subunit G family. As to quaternary structure, component of the eukaryotic translation initiation factor 3 (eIF-3) complex. The eIF-3 complex interacts with pix.

The protein resides in the cytoplasm. Its function is as follows. RNA-binding component of the eukaryotic translation initiation factor 3 (eIF-3) complex, which is involved in protein synthesis of a specialized repertoire of mRNAs and, together with other initiation factors, stimulates binding of mRNA and methionyl-tRNAi to the 40S ribosome. The eIF-3 complex specifically targets and initiates translation of a subset of mRNAs involved in cell proliferation. This subunit can bind 18S rRNA. This chain is Eukaryotic translation initiation factor 3 subunit G-1, found in Drosophila erecta (Fruit fly).